Here is a 131-residue protein sequence, read N- to C-terminus: Large ribosomal subunit protein bL12 (131 aa).

Belongs to the bacterial ribosomal protein bL12 family. In terms of assembly, homodimer. Part of the ribosomal stalk of the 50S ribosomal subunit. Forms a multimeric L10(L12)X complex, where L10 forms an elongated spine to which 2 to 4 L12 dimers bind in a sequential fashion. Binds GTP-bound translation factors.

Functionally, forms part of the ribosomal stalk which helps the ribosome interact with GTP-bound translation factors. Is thus essential for accurate translation. This chain is Large ribosomal subunit protein bL12, found in Prochlorococcus marinus (strain MIT 9215).